The following is a 328-amino-acid chain: Ribosomal RNA large subunit methyltransferase F (328 aa).

Positions 1-38 are disordered; sequence MTDTPKPPRKKPQRPAKPAAPREKATLHPRNRHQGHYD.

It belongs to the methyltransferase superfamily. METTL16/RlmF family.

The protein localises to the cytoplasm. It catalyses the reaction adenosine(1618) in 23S rRNA + S-adenosyl-L-methionine = N(6)-methyladenosine(1618) in 23S rRNA + S-adenosyl-L-homocysteine + H(+). Its function is as follows. Specifically methylates the adenine in position 1618 of 23S rRNA. The chain is Ribosomal RNA large subunit methyltransferase F from Pseudomonas syringae pv. tomato (strain ATCC BAA-871 / DC3000).